Consider the following 197-residue polypeptide: Dephospho-CoA kinase (197 aa).

The DPCK domain maps to 2–197; that stretch reads IIGLTGGIGS…HTKYMELLNE (196 aa). 10-15 is a binding site for ATP; it reads GSGKSA.

The protein belongs to the CoaE family.

It localises to the cytoplasm. The catalysed reaction is 3'-dephospho-CoA + ATP = ADP + CoA + H(+). It participates in cofactor biosynthesis; coenzyme A biosynthesis; CoA from (R)-pantothenate: step 5/5. Catalyzes the phosphorylation of the 3'-hydroxyl group of dephosphocoenzyme A to form coenzyme A. This is Dephospho-CoA kinase from Gamma-proteobacterium EBAC31A08.